Here is a 493-residue protein sequence, read N- to C-terminus: UDP-N-acetylmuramoyl-L-alanyl-D-glutamate--2,6-diaminopimelate ligase (493 aa).

Ser-31 contributes to the UDP-N-acetyl-alpha-D-muramoyl-L-alanyl-D-glutamate binding site. 111-117 provides a ligand contact to ATP; that stretch reads GTNGKTT. UDP-N-acetyl-alpha-D-muramoyl-L-alanyl-D-glutamate is bound by residues Asn-152, 153–154, Ser-180, and Arg-188; that span reads TT. Residue Lys-220 is modified to N6-carboxylysine. Residues Arg-386, 410-413, Gly-462, and Glu-466 each bind meso-2,6-diaminopimelate; that span reads DNPR. The Meso-diaminopimelate recognition motif motif lies at 410–413; the sequence is DNPR.

The protein belongs to the MurCDEF family. MurE subfamily. The cofactor is Mg(2+). Carboxylation is probably crucial for Mg(2+) binding and, consequently, for the gamma-phosphate positioning of ATP.

The protein localises to the cytoplasm. The catalysed reaction is UDP-N-acetyl-alpha-D-muramoyl-L-alanyl-D-glutamate + meso-2,6-diaminopimelate + ATP = UDP-N-acetyl-alpha-D-muramoyl-L-alanyl-gamma-D-glutamyl-meso-2,6-diaminopimelate + ADP + phosphate + H(+). It participates in cell wall biogenesis; peptidoglycan biosynthesis. Functionally, catalyzes the addition of meso-diaminopimelic acid to the nucleotide precursor UDP-N-acetylmuramoyl-L-alanyl-D-glutamate (UMAG) in the biosynthesis of bacterial cell-wall peptidoglycan. This chain is UDP-N-acetylmuramoyl-L-alanyl-D-glutamate--2,6-diaminopimelate ligase (murE1), found in Oceanobacillus iheyensis (strain DSM 14371 / CIP 107618 / JCM 11309 / KCTC 3954 / HTE831).